The primary structure comprises 260 residues: Adenosylcobinamide-GDP ribazoletransferase (260 aa).

A run of 8 helical transmembrane segments spans residues alanine 3–tryptophan 23, phenylalanine 36–isoleucine 56, tryptophan 60–leucine 80, valine 108–leucine 128, leucine 133–methionine 153, alanine 180–valine 200, methionine 206–leucine 226, and glycine 239–alanine 259.

It belongs to the CobS family. It depends on Mg(2+) as a cofactor.

The protein localises to the cell inner membrane. It catalyses the reaction alpha-ribazole + adenosylcob(III)inamide-GDP = adenosylcob(III)alamin + GMP + H(+). The catalysed reaction is alpha-ribazole 5'-phosphate + adenosylcob(III)inamide-GDP = adenosylcob(III)alamin 5'-phosphate + GMP + H(+). The protein operates within cofactor biosynthesis; adenosylcobalamin biosynthesis; adenosylcobalamin from cob(II)yrinate a,c-diamide: step 7/7. Functionally, joins adenosylcobinamide-GDP and alpha-ribazole to generate adenosylcobalamin (Ado-cobalamin). Also synthesizes adenosylcobalamin 5'-phosphate from adenosylcobinamide-GDP and alpha-ribazole 5'-phosphate. The chain is Adenosylcobinamide-GDP ribazoletransferase from Prochlorococcus marinus (strain MIT 9313).